Reading from the N-terminus, the 707-residue chain is Protein kinase C-like 1B (707 aa).

The region spanning 1–114 (MLFTGTVRVR…KIGSANDIWV (114 aa)) is the C2 domain. Phorbol-ester/DAG-type zinc fingers lie at residues 170-220 (GHKF…VWKC) and 248-298 (PHRF…ANNC). The tract at residues 323–368 (SKKKPSIMTDTSTDISGSSNSENSGYLQQISEDDSGTTSSRSASKV) is disordered. Residues 330–365 (MTDTSTDISGSSNSENSGYLQQISEDDSGTTSSRSA) are compositionally biased toward polar residues. Residues 378 to 638 (FTFMKVLGKG…EDAIRAHPFF (261 aa)) form the Protein kinase domain. ATP is bound by residues 384 to 392 (LGKGSFGKV) and Lys407. The active-site Proton acceptor is Asp502. The AGC-kinase C-terminal domain maps to 639-707 (REIDWDALES…FSFINPHFTY (69 aa)).

This sequence belongs to the protein kinase superfamily. AGC Ser/Thr protein kinase family. PKC subfamily. In terms of tissue distribution, expressed selectively in neurons that receive, transmit and process environmental signals.

The protein resides in the membrane. Its subcellular location is the cytoplasm. It localises to the cytoskeleton. The enzyme catalyses L-seryl-[protein] + ATP = O-phospho-L-seryl-[protein] + ADP + H(+). The catalysed reaction is L-threonyl-[protein] + ATP = O-phospho-L-threonyl-[protein] + ADP + H(+). Its function is as follows. PKC is activated by diacylglycerol which in turn phosphorylates a range of cellular proteins. PKC also serves as the receptor for phorbol esters, a class of tumor promoters. Involved in neuropeptide secretion in motor axons. Likely to act via the extracellular signal-regulated kinase/mitogen-activated protein kinase (ERK/MAPK) pathway in the signaling response to various sensory neurons; temperature, odor, taste, and osmolality. Its role in regulation differs depending on the neuron in which it is acting; thermosensation in AFD neurons, osmolality in ASH neurons, olfactory perception in AWA and AWC neurons. Promotes dauer formation mediated by the insulin/IGF pathway. Required for resistance to antimitotic toxins. This chain is Protein kinase C-like 1B, found in Caenorhabditis elegans.